The primary structure comprises 176 residues: NAD(P)H-quinone oxidoreductase subunit I, chloroplastic (176 aa).

4Fe-4S ferredoxin-type domains follow at residues 55–84 (GRIH…VNWE) and 95–124 (QTYS…MTEE). 8 residues coordinate [4Fe-4S] cluster: C64, C67, C70, C74, C104, C107, C110, and C114.

Belongs to the complex I 23 kDa subunit family. In terms of assembly, NDH is composed of at least 16 different subunits, 5 of which are encoded in the nucleus. The cofactor is [4Fe-4S] cluster.

Its subcellular location is the plastid. It is found in the chloroplast thylakoid membrane. The catalysed reaction is a plastoquinone + NADH + (n+1) H(+)(in) = a plastoquinol + NAD(+) + n H(+)(out). It carries out the reaction a plastoquinone + NADPH + (n+1) H(+)(in) = a plastoquinol + NADP(+) + n H(+)(out). In terms of biological role, NDH shuttles electrons from NAD(P)H:plastoquinone, via FMN and iron-sulfur (Fe-S) centers, to quinones in the photosynthetic chain and possibly in a chloroplast respiratory chain. The immediate electron acceptor for the enzyme in this species is believed to be plastoquinone. Couples the redox reaction to proton translocation, and thus conserves the redox energy in a proton gradient. This is NAD(P)H-quinone oxidoreductase subunit I, chloroplastic from Mesostigma viride (Green alga).